The sequence spans 81 residues: Gamma-conotoxin-like TxMEKL-0511 (81 aa).

An N-terminal signal peptide occupies residues methionine 1 to alanine 19. Residues leucine 20–arginine 45 constitute a propeptide that is removed on maturation. 3 disulfide bridges follow: cysteine 49–cysteine 63, cysteine 56–cysteine 67, and cysteine 62–cysteine 72.

Belongs to the conotoxin O2 superfamily. In terms of tissue distribution, expressed by the venom duct.

It is found in the secreted. Its function is as follows. Gamma-conotoxins may act on voltage-gated non-specific cation pacemaker channels (HCN). This Conus textile (Cloth-of-gold cone) protein is Gamma-conotoxin-like TxMEKL-0511.